A 575-amino-acid polypeptide reads, in one-letter code: Transcription factor COE2 (575 aa).

The interaction with DNA stretch occupies residues 62–65 (RKSN). The C5-type zinc finger occupies 150–169 (CRVLLTHEVMCSRCCEKKSC). Interaction with DNA stretches follow at residues 196–203 (NCLKTAGN) and 235–238 (NNSK). Positions 253–336 (PCIKAISPSE…KGAPGRFIYT (84 aa)) constitute an IPT/TIG domain. Over residues 441–453 (STQGNNQGYIRNT) the composition is skewed to polar residues. The interval 441–479 (STQGNNQGYIRNTSSISPRGYSSSSTPQQSNYSTSSNSM) is disordered. The segment covering 454–479 (SSISPRGYSSSSTPQQSNYSTSSNSM) has biased composition (low complexity).

This sequence belongs to the COE family. In terms of assembly, forms either a homodimer or a heterodimer with a related family member. Interacts with SIX1. In adult expressed in olfactory epithelium and at a much lower level in Purkinje cells of the cerebellum. In embryo expressed in epithalamus, in cells near the ventricular zone of mesencephalon and on the ventral surface of rhombencephalon, in the developing vomeronasal organ, at a lower level in developing spinal cord. Not expressed in developing retina, inner ear, dorsal root ganglia, trigeminal ganglia and glossopharyngeal ganglia.

It is found in the nucleus. Transcription factor that, in osteoblasts, activates the decoy receptor for RANKL, TNFRSF11B, which in turn regulates osteoclast differentiation. Acts in synergy with the Wnt-responsive LEF1/CTNNB1 pathway. Recognizes variations of the palindromic sequence 5'-ATTCCCNNGGGAATT-3'. The sequence is that of Transcription factor COE2 (Ebf2) from Mus musculus (Mouse).